The following is a 105-amino-acid chain: Urease subunit beta (105 aa).

Belongs to the urease beta subunit family. Heterotrimer of UreA (gamma), UreB (beta) and UreC (alpha) subunits. Three heterotrimers associate to form the active enzyme.

It localises to the cytoplasm. It catalyses the reaction urea + 2 H2O + H(+) = hydrogencarbonate + 2 NH4(+). The protein operates within nitrogen metabolism; urea degradation; CO(2) and NH(3) from urea (urease route): step 1/1. This is Urease subunit beta from Pseudomonas entomophila (strain L48).